Reading from the N-terminus, the 213-residue chain is Peroxynitrite isomerase (213 aa).

The span at 1-10 (MGADATGDTA) shows a compositional bias: low complexity. The interval 1-26 (MGADATGDTAARGDRAAHGDTASGGA) is disordered. The GXWXGXG motif lies at 51-57 (GTWRGEG). Histidine 203 is a binding site for heme b.

Belongs to the nitrobindin family. Homodimer. Requires heme b as cofactor.

The catalysed reaction is peroxynitrite = nitrate. Its pathway is nitrogen metabolism. Heme-binding protein able to scavenge peroxynitrite and to protect free L-tyrosine against peroxynitrite-mediated nitration, by acting as a peroxynitrite isomerase that converts peroxynitrite to nitrate. Therefore, this protein likely plays a role in peroxynitrite sensing and in the detoxification of reactive nitrogen and oxygen species (RNS and ROS, respectively). Is able to bind nitric oxide (NO) in vitro, but may act as a sensor of peroxynitrite levels in vivo. The protein is Peroxynitrite isomerase of Parafrankia sp. (strain EAN1pec).